Consider the following 78-residue polypeptide: Acyl carrier protein (78 aa).

Residues 4–78 (AEIKDKVYDI…QQAIDYIVKK (75 aa)) enclose the Carrier domain. Ser-39 is subject to O-(pantetheine 4'-phosphoryl)serine.

Belongs to the acyl carrier protein (ACP) family. Post-translationally, 4'-phosphopantetheine is transferred from CoA to a specific serine of apo-ACP by AcpS. This modification is essential for activity because fatty acids are bound in thioester linkage to the sulfhydryl of the prosthetic group.

The protein localises to the cytoplasm. Its pathway is lipid metabolism; fatty acid biosynthesis. In terms of biological role, carrier of the growing fatty acid chain in fatty acid biosynthesis. This Chlorobium phaeovibrioides (strain DSM 265 / 1930) (Prosthecochloris vibrioformis (strain DSM 265)) protein is Acyl carrier protein.